The chain runs to 913 residues: DNA mismatch repair protein MutS (913 aa).

720 to 727 (GPNASGKS) is a binding site for ATP.

Belongs to the DNA mismatch repair MutS family.

Functionally, this protein is involved in the repair of mismatches in DNA. It is possible that it carries out the mismatch recognition step. This protein has a weak ATPase activity. In Prochlorococcus marinus (strain MIT 9312), this protein is DNA mismatch repair protein MutS.